Consider the following 447-residue polypeptide: MSEYYDFNKMEYIGNQKGLKAGDGFHYYNPDELIQGKKMSEWLKFSVAYWHTMDQRLVDPFGDGTAQRPWDKFEDPMEQALAKVDYMFEFLDKMNVEYFAFHDRDLAPEGNTLRETNANLDKVVDKIVEKMQETGKKVLWNTSSLFTNPRFVAGGATAPFADIVAYSAAQIKHSLEIAKRVNSMNYVFWGGREGYESLLNTDMKLEQEHIAKFFHMAKDYANEIGYTGQFLLEPKPKEPTSHQYDTDAATTIAFLKTYGLEKDFKLNLEGNHAYLAGHTYEHEVRVARDAGLLGSLDANMGDKLIGWDIDEFPNDIYEATLVMYEMLKNGGLATGGLNFDAKPRRQSFTMEDLFLAHTAGMDTYAAGLRVAAKLLEDRVFDSVIEDRYSSFKSGIGADFENDKVTFKELEDYVIDKPQSELIAATKSGHLEQLKSTLNNYIFTVLGK.

Catalysis depends on residues His-102 and Asp-105. Mg(2+)-binding residues include Glu-233, Glu-269, His-272, Asp-297, Asp-308, Asp-310, and Asp-340.

This sequence belongs to the xylose isomerase family. In terms of assembly, homotetramer. The cofactor is Mg(2+).

It localises to the cytoplasm. The enzyme catalyses alpha-D-xylose = alpha-D-xylulofuranose. The chain is Xylose isomerase from Pediococcus pentosaceus (strain ATCC 25745 / CCUG 21536 / LMG 10740 / 183-1w).